A 348-amino-acid polypeptide reads, in one-letter code: tRNA N6-adenosine threonylcarbamoyltransferase (348 aa).

Fe cation-binding residues include H119 and H123. Substrate is bound by residues L141–G145, D174, G187, D191, and N280. A Fe cation-binding site is contributed by D310.

This sequence belongs to the KAE1 / TsaD family. Fe(2+) serves as cofactor.

Its subcellular location is the cytoplasm. The catalysed reaction is L-threonylcarbamoyladenylate + adenosine(37) in tRNA = N(6)-L-threonylcarbamoyladenosine(37) in tRNA + AMP + H(+). Required for the formation of a threonylcarbamoyl group on adenosine at position 37 (t(6)A37) in tRNAs that read codons beginning with adenine. Is involved in the transfer of the threonylcarbamoyl moiety of threonylcarbamoyl-AMP (TC-AMP) to the N6 group of A37, together with TsaE and TsaB. TsaD likely plays a direct catalytic role in this reaction. The sequence is that of tRNA N6-adenosine threonylcarbamoyltransferase from Enterococcus faecalis (strain ATCC 700802 / V583).